The primary structure comprises 268 residues: Small ribosomal subunit protein uS2 (268 aa).

The laminin-binding stretch occupies residues 161 to 179; it reads IPCNNDKYSIALMLWMLAR.

The protein belongs to the universal ribosomal protein uS2 family. In terms of assembly, component of the small ribosomal subunit. Mature ribosomes consist of a small (40S) and a large (60S) subunit. The 40S subunit contains about 33 different proteins and 1 molecule of RNA (18S). The 60S subunit contains about 49 different proteins and 3 molecules of RNA (28S, 5.8S and 5S). Interacts with ribosomal protein S21.

The protein resides in the cytoplasm. Functionally, required for the assembly and/or stability of the 40S ribosomal subunit. Required for the processing of the 20S rRNA-precursor to mature 18S rRNA in a late step of the maturation of 40S ribosomal subunits. Binds laminin. The protein is Small ribosomal subunit protein uS2 (egmo3) of Echinococcus granulosus (Hydatid tapeworm).